Here is a 355-residue protein sequence, read N- to C-terminus: UDP-N-acetylglucosamine--N-acetylmuramyl-(pentapeptide) pyrophosphoryl-undecaprenol N-acetylglucosamine transferase (355 aa).

UDP-N-acetyl-alpha-D-glucosamine is bound by residues 15-17, asparagine 127, arginine 163, serine 191, isoleucine 244, 263-268, and glutamine 288; these read TGG and ALTVSE.

It belongs to the glycosyltransferase 28 family. MurG subfamily.

It is found in the cell inner membrane. It carries out the reaction di-trans,octa-cis-undecaprenyl diphospho-N-acetyl-alpha-D-muramoyl-L-alanyl-D-glutamyl-meso-2,6-diaminopimeloyl-D-alanyl-D-alanine + UDP-N-acetyl-alpha-D-glucosamine = di-trans,octa-cis-undecaprenyl diphospho-[N-acetyl-alpha-D-glucosaminyl-(1-&gt;4)]-N-acetyl-alpha-D-muramoyl-L-alanyl-D-glutamyl-meso-2,6-diaminopimeloyl-D-alanyl-D-alanine + UDP + H(+). It functions in the pathway cell wall biogenesis; peptidoglycan biosynthesis. Functionally, cell wall formation. Catalyzes the transfer of a GlcNAc subunit on undecaprenyl-pyrophosphoryl-MurNAc-pentapeptide (lipid intermediate I) to form undecaprenyl-pyrophosphoryl-MurNAc-(pentapeptide)GlcNAc (lipid intermediate II). The protein is UDP-N-acetylglucosamine--N-acetylmuramyl-(pentapeptide) pyrophosphoryl-undecaprenol N-acetylglucosamine transferase of Escherichia coli (strain 55989 / EAEC).